The chain runs to 317 residues: MSSLSSGPQDTGGSSSSSSNGSSGSGPKAGVADKSAAVAAAAPASVADDAPPPERRNKSGIISEPLNKSLRRSRPLSHYSSFGGSGGSGGGSMMGGESAEKAAAAAASLLANGHDLAAAMAVDKSNSTSKHKSSAVASLLSKAERATELGAEGQLTLQQFAQSTEMLKRVVQEHLPLMSEAGAGLPDMEAVAGAEALNGQSDFPYLGAFPINPGLFIMTPAGVFLAESALHMAGLAEYPMQGELASAISSGKKKRKRCGMCAPCRRRINCEQCSSCRNRKTGHQICKFRKCEELKKKPSAALEKVMLPTGAAFRWFQ.

Over residues 1 to 49 the composition is skewed to low complexity; the sequence is MSSLSSGPQDTGGSSSSSSNGSSGSGPKAGVADKSAAVAAAAPASVADD. Residues 1 to 96 form a disordered region; the sequence is MSSLSSGPQD…GSGGGSMMGG (96 aa). The span at 83–94 shows a compositional bias: gly residues; that stretch reads GGSGGSGGGSMM. Residues 251 to 292 form a CXXC-type zinc finger; sequence GKKKRKRCGMCAPCRRRINCEQCSSCRNRKTGHQICKFRKCE. Positions 252–257 match the Nuclear localization signal motif; that stretch reads KKKRKR. Residues Cys258, Cys261, Cys264, Cys270, Cys273, Cys276, Cys286, and Cys291 each coordinate Zn(2+).

As to quaternary structure, interacts with DVL1. Interacts with RBPJ.

It localises to the nucleus. Its subcellular location is the cytoplasm. In terms of biological role, may indirectly participate in activation of the NF-kappa-B and MAPK pathways. Acts as a mediator of BMP4-mediated modulation of canonical Wnt signaling activity in neural stem cells. Required for DNA damage-induced ATM phosphorylation, p53 activation and cell cycle arrest. Involved in myelopoiesis. Binds to the oxygen responsive element of COX4I2 and represses its transcription under hypoxia conditions (4% oxygen), as well as normoxia conditions (20% oxygen). May repress COX4I2 transactivation induced by CHCHD2 and RBPJ. Binds preferentially to DNA containing cytidine-phosphate-guanosine (CpG) dinucleotides over CpH (H=A, T, and C), hemimethylated-CpG and hemimethylated-hydroxymethyl-CpG. The sequence is that of CXXC-type zinc finger protein 5 (CXXC5) from Bos taurus (Bovine).